The chain runs to 236 residues: MEQMDAHQIISFIQNSKKATPVKVYLKGDLEKIDFPSDVKTFITGNAGTIFGEWAVVEPFLEANKANIEDYVIENDRRNSAIPLLDMKNINARIEPGAVIRDQVTIGDNAVIMMGASINIGSVIGDGTMIDMNVVLGGRATVGKNCHIGAGSVLAGVVEPPSAQPVVVEDNVVVGANVVVLEGVRIGEGAVVAAGAIVTKDVAPGTVVAGIPARELKKLDAKTASKTEIMQELRQL.

The protein belongs to the transferase hexapeptide repeat family. DapH subfamily.

It catalyses the reaction (S)-2,3,4,5-tetrahydrodipicolinate + acetyl-CoA + H2O = L-2-acetamido-6-oxoheptanedioate + CoA. It participates in amino-acid biosynthesis; L-lysine biosynthesis via DAP pathway; LL-2,6-diaminopimelate from (S)-tetrahydrodipicolinate (acetylase route): step 1/3. Its function is as follows. Catalyzes the transfer of an acetyl group from acetyl-CoA to tetrahydrodipicolinate. This Listeria monocytogenes serotype 4b (strain CLIP80459) protein is 2,3,4,5-tetrahydropyridine-2,6-dicarboxylate N-acetyltransferase.